We begin with the raw amino-acid sequence, 227 residues long: 7-cyano-7-deazaguanine synthase (227 aa).

An ATP-binding site is contributed by 16–26 (FSGGQDSTTCL). Zn(2+) is bound by residues Cys194, Cys202, Cys205, and Cys208.

The protein belongs to the QueC family. It depends on Zn(2+) as a cofactor.

It catalyses the reaction 7-carboxy-7-deazaguanine + NH4(+) + ATP = 7-cyano-7-deazaguanine + ADP + phosphate + H2O + H(+). Its pathway is purine metabolism; 7-cyano-7-deazaguanine biosynthesis. In terms of biological role, catalyzes the ATP-dependent conversion of 7-carboxy-7-deazaguanine (CDG) to 7-cyano-7-deazaguanine (preQ(0)). This chain is 7-cyano-7-deazaguanine synthase, found in Haemophilus influenzae (strain PittEE).